Consider the following 310-residue polypeptide: Ribonuclease Z (310 aa).

Zn(2+)-binding residues include His64, His66, Asp68, His69, His146, Asp215, and His273. The active-site Proton acceptor is Asp68.

This sequence belongs to the RNase Z family. In terms of assembly, homodimer. Requires Zn(2+) as cofactor.

The catalysed reaction is Endonucleolytic cleavage of RNA, removing extra 3' nucleotides from tRNA precursor, generating 3' termini of tRNAs. A 3'-hydroxy group is left at the tRNA terminus and a 5'-phosphoryl group is left at the trailer molecule.. Functionally, zinc phosphodiesterase, which displays some tRNA 3'-processing endonuclease activity. Probably involved in tRNA maturation, by removing a 3'-trailer from precursor tRNA. The sequence is that of Ribonuclease Z from Aeropyrum pernix (strain ATCC 700893 / DSM 11879 / JCM 9820 / NBRC 100138 / K1).